The sequence spans 700 residues: Polyphosphate kinase (700 aa).

Residue Asn-45 coordinates ATP. Mg(2+) contacts are provided by Arg-373 and Arg-403. The 35-residue stretch at 428 to 462 (PGMKIHAKLLLITRREEQGFVRYAHIGTGNFHERT) folds into the PLD phosphodiesterase 1 domain. His-433 (phosphohistidine intermediate) is an active-site residue. Residues Tyr-466, Arg-562, and His-590 each coordinate ATP. Residues 585 to 615 (DRFLEHPRVLVVHNDGDPQVFISSADWMERN) form the PLD phosphodiesterase 2 domain.

This sequence belongs to the polyphosphate kinase 1 (PPK1) family. It depends on Mg(2+) as a cofactor. Post-translationally, an intermediate of this reaction is the autophosphorylated ppk in which a phosphate is covalently linked to a histidine residue through a N-P bond.

It carries out the reaction [phosphate](n) + ATP = [phosphate](n+1) + ADP. In terms of biological role, catalyzes the reversible transfer of the terminal phosphate of ATP to form a long-chain polyphosphate (polyP). This Vibrio vulnificus (strain YJ016) protein is Polyphosphate kinase.